Consider the following 64-residue polypeptide: DNA-binding protein 7a (64 aa).

An N6-methyllysine; partial mark is found at K5 and K7.

The protein belongs to the 7 kDa DNA-binding/endoribonuclease P2 family. As to quaternary structure, homodimer. Post-translationally, lys-5 and Lys-7 were found to be 60% monomethylated. In terms of processing, ADP-ribosylated by endogenous proteins in vitro.

In terms of biological role, can constrain negative DNA supercoils. May be involved in maintaining the integrity of the genome at high temperature. Has RNA endonuclease activity with a narrow substrate specificity; the cleavage products are 3'-phosphooligonucleotides. This chain is DNA-binding protein 7a (sso7a1), found in Saccharolobus solfataricus (strain ATCC 35092 / DSM 1617 / JCM 11322 / P2) (Sulfolobus solfataricus).